A 270-amino-acid polypeptide reads, in one-letter code: Ribosomal RNA small subunit methyltransferase A (270 aa).

Residues His-11, Leu-13, Gly-38, Glu-59, Asp-84, and Asn-109 each contribute to the S-adenosyl-L-methionine site.

Belongs to the class I-like SAM-binding methyltransferase superfamily. rRNA adenine N(6)-methyltransferase family. RsmA subfamily.

The protein resides in the cytoplasm. The catalysed reaction is adenosine(1518)/adenosine(1519) in 16S rRNA + 4 S-adenosyl-L-methionine = N(6)-dimethyladenosine(1518)/N(6)-dimethyladenosine(1519) in 16S rRNA + 4 S-adenosyl-L-homocysteine + 4 H(+). In terms of biological role, specifically dimethylates two adjacent adenosines (A1518 and A1519) in the loop of a conserved hairpin near the 3'-end of 16S rRNA in the 30S particle. May play a critical role in biogenesis of 30S subunits. The protein is Ribosomal RNA small subunit methyltransferase A of Crocosphaera subtropica (strain ATCC 51142 / BH68) (Cyanothece sp. (strain ATCC 51142)).